The sequence spans 200 residues: MARANPRRRATAAKDKWKMKEWFVVYAPDFFGSKEIGLTPADEPEKVIGRVVETTLKDLTGDFTKGHVKLYFQVYDVKGQNAYTKFKGHTLARSYIRSLVRRRTTRVDGIFNITTKDGYKLRVMGMVIAYRRIQTSQERAIRRIIQDIIYKKAEELNFADFVLQSVNGQIASEIAKEARKIYPIKRAEIRKIKVLAEPEA.

This sequence belongs to the eukaryotic ribosomal protein eS1 family.

The chain is Small ribosomal subunit protein eS1 from Thermococcus gammatolerans (strain DSM 15229 / JCM 11827 / EJ3).